The sequence spans 558 residues: Dihydroxy-acid dehydratase (558 aa).

Asp-78 contributes to the Mg(2+) binding site. Cys-119 contacts [2Fe-2S] cluster. Positions 120 and 121 each coordinate Mg(2+). Residue Lys-121 is modified to N6-carboxylysine. A [2Fe-2S] cluster-binding site is contributed by Cys-192. Glu-446 is a Mg(2+) binding site. Catalysis depends on Ser-472, which acts as the Proton acceptor.

It belongs to the IlvD/Edd family. As to quaternary structure, homodimer. [2Fe-2S] cluster serves as cofactor. The cofactor is Mg(2+).

The enzyme catalyses (2R)-2,3-dihydroxy-3-methylbutanoate = 3-methyl-2-oxobutanoate + H2O. It carries out the reaction (2R,3R)-2,3-dihydroxy-3-methylpentanoate = (S)-3-methyl-2-oxopentanoate + H2O. It functions in the pathway amino-acid biosynthesis; L-isoleucine biosynthesis; L-isoleucine from 2-oxobutanoate: step 3/4. It participates in amino-acid biosynthesis; L-valine biosynthesis; L-valine from pyruvate: step 3/4. In terms of biological role, functions in the biosynthesis of branched-chain amino acids. Catalyzes the dehydration of (2R,3R)-2,3-dihydroxy-3-methylpentanoate (2,3-dihydroxy-3-methylvalerate) into 2-oxo-3-methylpentanoate (2-oxo-3-methylvalerate) and of (2R)-2,3-dihydroxy-3-methylbutanoate (2,3-dihydroxyisovalerate) into 2-oxo-3-methylbutanoate (2-oxoisovalerate), the penultimate precursor to L-isoleucine and L-valine, respectively. The chain is Dihydroxy-acid dehydratase from Campylobacter jejuni subsp. doylei (strain ATCC BAA-1458 / RM4099 / 269.97).